The primary structure comprises 860 residues: Leucine--tRNA ligase (860 aa).

The short motif at 42–52 is the 'HIGH' region element; sequence PYPSGRLHMGH. The 'KMSKS' region signature appears at 619–623; sequence KMSKS. Lysine 622 contacts ATP.

The protein belongs to the class-I aminoacyl-tRNA synthetase family.

It is found in the cytoplasm. The enzyme catalyses tRNA(Leu) + L-leucine + ATP = L-leucyl-tRNA(Leu) + AMP + diphosphate. This Escherichia coli (strain ATCC 8739 / DSM 1576 / NBRC 3972 / NCIMB 8545 / WDCM 00012 / Crooks) protein is Leucine--tRNA ligase.